A 228-amino-acid polypeptide reads, in one-letter code: UPF0173 metal-dependent hydrolase lwe1590 (228 aa).

The protein belongs to the UPF0173 family.

The protein is UPF0173 metal-dependent hydrolase lwe1590 of Listeria welshimeri serovar 6b (strain ATCC 35897 / DSM 20650 / CCUG 15529 / CIP 8149 / NCTC 11857 / SLCC 5334 / V8).